A 94-amino-acid polypeptide reads, in one-letter code: Phosphoribosyl-ATP pyrophosphatase (94 aa).

Belongs to the PRA-PH family.

It localises to the cytoplasm. It catalyses the reaction 1-(5-phospho-beta-D-ribosyl)-ATP + H2O = 1-(5-phospho-beta-D-ribosyl)-5'-AMP + diphosphate + H(+). The protein operates within amino-acid biosynthesis; L-histidine biosynthesis; L-histidine from 5-phospho-alpha-D-ribose 1-diphosphate: step 2/9. This chain is Phosphoribosyl-ATP pyrophosphatase (hisE), found in Sulfurisphaera tokodaii (strain DSM 16993 / JCM 10545 / NBRC 100140 / 7) (Sulfolobus tokodaii).